We begin with the raw amino-acid sequence, 210 residues long: MSQQYTLPPLPYPYDALQPYISQQIMELHHKKHHQTYVNGLNAALEAQKKAAEANDVPKLVSVQQAIKFNGGGHINHSLFWKNLAPEKSGGGKIDQAPVLKAAIEQRWGSFDKFKDAFNTTLLGIQGSGWGWLVTDGPKGKLDITTTHDQDPVTGAAPVFGVDMWEHAYYLQYLNDKASYAKGIWNVINWAEAENRYIAGDKGGHPFMKL.

Mn(2+) is bound by residues His29, His77, Asp163, and His167.

Belongs to the iron/manganese superoxide dismutase family. Homotetramer. The cofactor is Mn(2+).

The protein resides in the mitochondrion matrix. The enzyme catalyses 2 superoxide + 2 H(+) = H2O2 + O2. Its function is as follows. Destroys superoxide anion radicals which are normally produced within the cells and which are toxic to biological systems. This is Superoxide dismutase [Mn], mitochondrial (sodB) from Aspergillus fumigatus (strain ATCC MYA-4609 / CBS 101355 / FGSC A1100 / Af293) (Neosartorya fumigata).